A 347-amino-acid polypeptide reads, in one-letter code: Protein YIPF1 homolog (347 aa).

Residues 1 to 115 (MSNYNNKHHD…FSDNVPLNTN (115 aa)) form a disordered region. Residues 1-166 (MSNYNNKHHD…FFNLIRENPD (166 aa)) are Cytoplasmic-facing. A compositionally biased stretch (polar residues) spans 34–47 (NLFPNTNIDYNDYT). 2 stretches are compositionally biased toward low complexity: residues 48–67 (QNRG…LQFQ) and 76–104 (NSNT…SSNN). The span at 105 to 115 (KFSDNVPLNTN) shows a compositional bias: polar residues. The chain crosses the membrane as a helical span at residues 167-187 (LYGPFWVLTSLVFIVAVTSNL). Over 188-207 (NEYFHSSDHKSWEVDIQKIV) the chain is Lumenal. Residues 208–228 (YSAITIYGYSFVIPLILWGIF) traverse the membrane as a helical segment. Residues 229–232 (KWMN) lie on the Cytoplasmic side of the membrane. The helical transmembrane segment at 233–253 (LGLRLLDMLCIYGYTLFIFVP) threads the bilayer. Over 254–255 (AS) the chain is Lumenal. The helical transmembrane segment at 256–276 (ILCVIPLQLVQWIIVAIASIV) threads the bilayer. The Cytoplasmic segment spans residues 277-296 (SGLFLVTNIFTPLKEDFTKR). Residues 297-317 (GLIICAVIGALHIGLALVLKL) traverse the membrane as a helical segment. The Lumenal segment spans residues 318-347 (YFFANSTENFTISDSSSTPTPTPTNTTKLL). 3 N-linked (GlcNAc...) asparagine glycosylation sites follow: Asn-322, Asn-326, and Asn-342.

It belongs to the YIP1 family.

Its subcellular location is the golgi apparatus. The protein resides in the cis-Golgi network membrane. It is found in the trans-Golgi network membrane. The protein localises to the late endosome membrane. This is Protein YIPF1 homolog (yipf1) from Dictyostelium discoideum (Social amoeba).